A 409-amino-acid chain; its full sequence is Putative lipoate-protein ligase A (409 aa).

A BPL/LPL catalytic domain is found at 146-330 (GPDNCRLLFY…RFQKTFKVDG (185 aa)). Residues Arg188, 193 to 196 (GTVL), and Lys249 each bind ATP. Lys249 lines the (R)-lipoate pocket.

It belongs to the LplA family. As to quaternary structure, monomer.

It carries out the reaction L-lysyl-[lipoyl-carrier protein] + (R)-lipoate + ATP = N(6)-[(R)-lipoyl]-L-lysyl-[lipoyl-carrier protein] + AMP + diphosphate + H(+). It functions in the pathway protein modification; protein lipoylation via exogenous pathway; protein N(6)-(lipoyl)lysine from lipoate: step 1/2. Its pathway is protein modification; protein lipoylation via exogenous pathway; protein N(6)-(lipoyl)lysine from lipoate: step 2/2. Catalyzes both the ATP-dependent activation of exogenously supplied lipoate to lipoyl-AMP and the transfer of the activated lipoyl onto the lipoyl domains of lipoate-dependent enzymes. In Saccharomyces cerevisiae (strain RM11-1a) (Baker's yeast), this protein is Putative lipoate-protein ligase A (AIM22).